A 108-amino-acid chain; its full sequence is Ig kappa chain V-V region MOPC 149 (108 aa).

The framework-1 stretch occupies residues Asp-1–Cys-23. Cysteines 23 and 88 form a disulfide. A complementarity-determining-1 region spans residues Arg-24 to Ala-34. Positions Trp-35–Tyr-49 are framework-2. The tract at residues Asp-50 to Glu-56 is complementarity-determining-2. The tract at residues Gly-57–Cys-88 is framework-3. Positions Gln-89–Thr-97 are complementarity-determining-3. Residues Phe-98–Arg-108 form a framework-4 region.

In Mus musculus (Mouse), this protein is Ig kappa chain V-V region MOPC 149.